The following is a 261-amino-acid chain: MTNQLHPFHMTNPSPWPLTGATAALLMTSGLIMWFHYNSSQLIMLGLLIMLLTLTQWWRDIVRESTFQGHHTPSVQNNLRYGMILFITSEILFFTGFFWAFYHSSLSPTAELGNIWPPTGITPLNPFEVPLLNTAVLLASGVTITWAHHSLMEGNRPQTLQALTLTIILGTYFTILQAMEYFEASFTIADSIYGSTFFVATGFHGLHVIIGSTFLIVCLMRQLKYHFTSHHHFGFEAAAWYWHFVDVIWLFLYLSIYWWGS.

The Mitochondrial matrix segment spans residues 1 to 15 (MTNQLHPFHMTNPSP). Residues 16-34 (WPLTGATAALLMTSGLIMW) form a helical membrane-spanning segment. Over 35–40 (FHYNSS) the chain is Mitochondrial intermembrane. Residues 41-66 (QLIMLGLLIMLLTLTQWWRDIVREST) form a helical membrane-spanning segment. At 67 to 72 (FQGHHT) the chain is on the mitochondrial matrix side. A helical membrane pass occupies residues 73 to 105 (PSVQNNLRYGMILFITSEILFFTGFFWAFYHSS). Residues 106-128 (LSPTAELGNIWPPTGITPLNPFE) are Mitochondrial intermembrane-facing. The chain crosses the membrane as a helical span at residues 129–152 (VPLLNTAVLLASGVTITWAHHSLM). Residues 153–155 (EGN) lie on the Mitochondrial matrix side of the membrane. The helical transmembrane segment at 156–183 (RPQTLQALTLTIILGTYFTILQAMEYFE) threads the bilayer. At 184–190 (ASFTIAD) the chain is on the mitochondrial intermembrane side. A helical membrane pass occupies residues 191–223 (SIYGSTFFVATGFHGLHVIIGSTFLIVCLMRQL). The Mitochondrial matrix portion of the chain corresponds to 224-232 (KYHFTSHHH). The helical transmembrane segment at 233 to 256 (FGFEAAAWYWHFVDVIWLFLYLSI) threads the bilayer. Residues 257-261 (YWWGS) are Mitochondrial intermembrane-facing.

Belongs to the cytochrome c oxidase subunit 3 family. In terms of assembly, component of the cytochrome c oxidase (complex IV, CIV), a multisubunit enzyme composed of 14 subunits. The complex is composed of a catalytic core of 3 subunits MT-CO1, MT-CO2 and MT-CO3, encoded in the mitochondrial DNA, and 11 supernumerary subunits COX4I, COX5A, COX5B, COX6A, COX6B, COX6C, COX7A, COX7B, COX7C, COX8 and NDUFA4, which are encoded in the nuclear genome. The complex exists as a monomer or a dimer and forms supercomplexes (SCs) in the inner mitochondrial membrane with NADH-ubiquinone oxidoreductase (complex I, CI) and ubiquinol-cytochrome c oxidoreductase (cytochrome b-c1 complex, complex III, CIII), resulting in different assemblies (supercomplex SCI(1)III(2)IV(1) and megacomplex MCI(2)III(2)IV(2)).

The protein resides in the mitochondrion inner membrane. The enzyme catalyses 4 Fe(II)-[cytochrome c] + O2 + 8 H(+)(in) = 4 Fe(III)-[cytochrome c] + 2 H2O + 4 H(+)(out). Its function is as follows. Component of the cytochrome c oxidase, the last enzyme in the mitochondrial electron transport chain which drives oxidative phosphorylation. The respiratory chain contains 3 multisubunit complexes succinate dehydrogenase (complex II, CII), ubiquinol-cytochrome c oxidoreductase (cytochrome b-c1 complex, complex III, CIII) and cytochrome c oxidase (complex IV, CIV), that cooperate to transfer electrons derived from NADH and succinate to molecular oxygen, creating an electrochemical gradient over the inner membrane that drives transmembrane transport and the ATP synthase. Cytochrome c oxidase is the component of the respiratory chain that catalyzes the reduction of oxygen to water. Electrons originating from reduced cytochrome c in the intermembrane space (IMS) are transferred via the dinuclear copper A center (CU(A)) of subunit 2 and heme A of subunit 1 to the active site in subunit 1, a binuclear center (BNC) formed by heme A3 and copper B (CU(B)). The BNC reduces molecular oxygen to 2 water molecules using 4 electrons from cytochrome c in the IMS and 4 protons from the mitochondrial matrix. This chain is Cytochrome c oxidase subunit 3 (MT-CO3), found in Pelomedusa subrufa (African side-necked turtle).